Consider the following 211-residue polypeptide: C-type lectin domain family 2 member L (211 aa).

The segment at 1-53 is disordered; the sequence is MEPAREPPARARPPPPAARPAPAAPRPRSPAEAEARGPEGLLRRSGSGYEGST. Over residues 10-28 the composition is skewed to pro residues; sequence RARPPPPAARPAPAAPRPR. At S29 the chain carries Phosphoserine. Residues 66–86 form a helical membrane-spanning segment; it reads LLLGAIAVLLFAILVVMSILA. The C-type lectin domain maps to 104–206; that stretch reads YGRKCYYFSE…CLTTRPWVCS (103 aa). Intrachain disulfides connect C125/C205 and C184/C197.

It localises to the membrane. In Mus musculus (Mouse), this protein is C-type lectin domain family 2 member L (Clec2l).